A 138-amino-acid polypeptide reads, in one-letter code: L-ectoine synthase (138 aa).

This sequence belongs to the ectoine synthase family.

The enzyme catalyses (2S)-4-acetamido-2-aminobutanoate = L-ectoine + H2O. Its pathway is amine and polyamine biosynthesis; ectoine biosynthesis; L-ectoine from L-aspartate 4-semialdehyde: step 3/3. Its function is as follows. Catalyzes the circularization of gamma-N-acetyl-alpha,gamma-diaminobutyric acid (ADABA) to ectoine (1,4,5,6-tetrahydro-2-methyl-4-pyrimidine carboxylic acid), which is an excellent osmoprotectant. This is L-ectoine synthase from Vibrio cholerae serotype O1 (strain ATCC 39541 / Classical Ogawa 395 / O395).